Reading from the N-terminus, the 820-residue chain is Sucrose synthase 2 (820 aa).

Residues 276–753 (MVFNVVILSP…GLKRIYEKYT (478 aa)) form a GT-B glycosyltransferase region.

Belongs to the glycosyltransferase 1 family. Plant sucrose synthase subfamily.

The enzyme catalyses an NDP-alpha-D-glucose + D-fructose = a ribonucleoside 5'-diphosphate + sucrose + H(+). Functionally, sucrose-cleaving enzyme that provides UDP-glucose and fructose for various metabolic pathways. The chain is Sucrose synthase 2 from Tulipa gesneriana (Garden tulip).